A 286-amino-acid chain; its full sequence is tRNA (guanine-N(7)-)-methyltransferase (286 aa).

S-adenosyl-L-methionine is bound by residues Gly103, 126–127 (EI), 161–162 (NA), and Cys181. The active site involves Asp184. 259-261 (TEE) is a binding site for S-adenosyl-L-methionine.

Belongs to the class I-like SAM-binding methyltransferase superfamily. TrmB family. Forms a complex with TRM82.

The protein localises to the nucleus. The enzyme catalyses guanosine(46) in tRNA + S-adenosyl-L-methionine = N(7)-methylguanosine(46) in tRNA + S-adenosyl-L-homocysteine. Its pathway is tRNA modification; N(7)-methylguanine-tRNA biosynthesis. In terms of biological role, catalyzes the formation of N(7)-methylguanine at position 46 (m7G46) in tRNA. The protein is tRNA (guanine-N(7)-)-methyltransferase of Vanderwaltozyma polyspora (strain ATCC 22028 / DSM 70294 / BCRC 21397 / CBS 2163 / NBRC 10782 / NRRL Y-8283 / UCD 57-17) (Kluyveromyces polysporus).